The chain runs to 421 residues: Probable 26S proteasome regulatory subunit rpn6 (421 aa).

Residues 221-390 (DFKTAYSYFY…GCLIVYDEPQ (170 aa)) form the PCI domain.

The protein belongs to the proteasome subunit S9 family. In terms of assembly, component of the lid subcomplex of the 19S proteasome regulatory particle complex (also named PA700 complex). The 26S proteasome consists of a 20S proteasome core and two 19S regulatory subunits.

In terms of biological role, component of the lid subcomplex of the 26S proteasome, a multiprotein complex involved in the ATP-dependent degradation of ubiquitinated proteins. In the complex, rpn6 is required for proteasome assembly. The polypeptide is Probable 26S proteasome regulatory subunit rpn6 (rpn6) (Schizosaccharomyces pombe (strain 972 / ATCC 24843) (Fission yeast)).